The sequence spans 395 residues: Imidazolonepropionase (395 aa).

The Fe(3+) site is built by histidine 63 and histidine 65. Residues histidine 63 and histidine 65 each contribute to the Zn(2+) site. Residues arginine 72, tyrosine 135, and histidine 168 each coordinate 4-imidazolone-5-propanoate. An N-formimidoyl-L-glutamate-binding site is contributed by tyrosine 135. Histidine 233 contributes to the Fe(3+) binding site. Histidine 233 serves as a coordination point for Zn(2+). Residue glutamine 236 coordinates 4-imidazolone-5-propanoate. Residue aspartate 308 coordinates Fe(3+). Aspartate 308 is a Zn(2+) binding site. Asparagine 310 and glycine 312 together coordinate N-formimidoyl-L-glutamate. Position 313 (threonine 313) interacts with 4-imidazolone-5-propanoate.

It belongs to the metallo-dependent hydrolases superfamily. HutI family. Requires Zn(2+) as cofactor. Fe(3+) is required as a cofactor.

It is found in the cytoplasm. The catalysed reaction is 4-imidazolone-5-propanoate + H2O = N-formimidoyl-L-glutamate. It functions in the pathway amino-acid degradation; L-histidine degradation into L-glutamate; N-formimidoyl-L-glutamate from L-histidine: step 3/3. Functionally, catalyzes the hydrolytic cleavage of the carbon-nitrogen bond in imidazolone-5-propanoate to yield N-formimidoyl-L-glutamate. It is the third step in the universal histidine degradation pathway. In Cereibacter sphaeroides (strain KD131 / KCTC 12085) (Rhodobacter sphaeroides), this protein is Imidazolonepropionase.